The following is a 147-amino-acid chain: 3-dehydroquinate dehydratase (147 aa).

Catalysis depends on Y24, which acts as the Proton acceptor. Substrate is bound by residues N75, H81, and D88. The Proton donor role is filled by H101. Residues 102 to 103 and R112 contribute to the substrate site; that span reads IS.

The protein belongs to the type-II 3-dehydroquinase family. Homododecamer.

It catalyses the reaction 3-dehydroquinate = 3-dehydroshikimate + H2O. The protein operates within metabolic intermediate biosynthesis; chorismate biosynthesis; chorismate from D-erythrose 4-phosphate and phosphoenolpyruvate: step 3/7. In terms of biological role, catalyzes a trans-dehydration via an enolate intermediate. The sequence is that of 3-dehydroquinate dehydratase from Cereibacter sphaeroides (strain ATCC 17029 / ATH 2.4.9) (Rhodobacter sphaeroides).